The chain runs to 185 residues: Threonylcarbamoyl-AMP synthase (185 aa).

The YrdC-like domain maps to Ser-4 to Gly-185.

The protein belongs to the SUA5 family. TsaC subfamily.

It localises to the cytoplasm. The catalysed reaction is L-threonine + hydrogencarbonate + ATP = L-threonylcarbamoyladenylate + diphosphate + H2O. Required for the formation of a threonylcarbamoyl group on adenosine at position 37 (t(6)A37) in tRNAs that read codons beginning with adenine. Catalyzes the conversion of L-threonine, HCO(3)(-)/CO(2) and ATP to give threonylcarbamoyl-AMP (TC-AMP) as the acyladenylate intermediate, with the release of diphosphate. The protein is Threonylcarbamoyl-AMP synthase of Pseudomonas putida (strain GB-1).